Reading from the N-terminus, the 86-residue chain is Small ribosomal subunit protein bS20 (86 aa).

A compositionally biased stretch (basic and acidic residues) spans Met-1 to Arg-16. The segment at Met-1–Lys-25 is disordered.

The protein belongs to the bacterial ribosomal protein bS20 family.

Functionally, binds directly to 16S ribosomal RNA. This Mycobacterium sp. (strain JLS) protein is Small ribosomal subunit protein bS20.